The sequence spans 391 residues: Terminal nucleotidyltransferase 5C (391 aa).

It belongs to the TENT family. In terms of assembly, interacts with BCCIP and PABPC1; the interaction has no effect on TENT5C poly(A) polymerase function. Interacts with PLK4; this interaction leads to the TENT5C recruitment into the centrosome.

It localises to the nucleus. Its subcellular location is the cytoplasm. The protein localises to the cytoskeleton. The protein resides in the microtubule organizing center. It is found in the centrosome. The catalysed reaction is RNA(n) + ATP = RNA(n)-3'-adenine ribonucleotide + diphosphate. In terms of biological role, catalyzes the transfer of one adenosine molecule from an ATP to an mRNA poly(A) tail bearing a 3'-OH terminal group and enhances mRNA stability and gene expression. Can also elongate RNA oligos ending with uridine molecule, provided that the sequence is adenosine-rich. Mainly targets mRNAs encoding endoplasmic reticulum-targeted protein. The sequence is that of Terminal nucleotidyltransferase 5C from Rattus norvegicus (Rat).